Reading from the N-terminus, the 355-residue chain is Tetraacyldisaccharide 4'-kinase (355 aa).

49 to 56 (SAGGTGKT) contributes to the ATP binding site.

The protein belongs to the LpxK family.

It carries out the reaction a lipid A disaccharide + ATP = a lipid IVA + ADP + H(+). Its pathway is glycolipid biosynthesis; lipid IV(A) biosynthesis; lipid IV(A) from (3R)-3-hydroxytetradecanoyl-[acyl-carrier-protein] and UDP-N-acetyl-alpha-D-glucosamine: step 6/6. Its function is as follows. Transfers the gamma-phosphate of ATP to the 4'-position of a tetraacyldisaccharide 1-phosphate intermediate (termed DS-1-P) to form tetraacyldisaccharide 1,4'-bis-phosphate (lipid IVA). This is Tetraacyldisaccharide 4'-kinase from Chlorobium phaeobacteroides (strain DSM 266 / SMG 266 / 2430).